A 284-amino-acid chain; its full sequence is Averufin oxidase A (284 aa).

An N-terminal signal peptide occupies residues 1-23; sequence MPTYALLGATGATGSAILRCLLA. N-linked (GlcNAc...) asparagine glycosylation is found at N62, N86, and N190.

It belongs to the avfA family.

The protein operates within mycotoxin biosynthesis. In terms of biological role, averufin oxidase A; part of the fragmented gene cluster that mediates the biosynthesis of dothistromin (DOTH), a polyketide toxin very similar in structure to the aflatoxin precursor, versicolorin B. The first step of the pathway is the conversion of acetate to norsolorinic acid (NOR) and requires the fatty acid synthase subunits hexA and hexB, as well as the polyketide synthase pksA. PksA combines a hexanoyl starter unit and 7 malonyl-CoA extender units to synthesize the precursor NOR. The hexanoyl starter unit is provided to the acyl-carrier protein (ACP) domain by the fungal fatty acid synthase hexA/hexB. The second step is the conversion of NOR to averantin (AVN) and requires the norsolorinic acid ketoreductase nor1, which catalyzes the dehydration of norsolorinic acid to form (1'S)-averantin. The cytochrome P450 monooxygenase avnA then catalyzes the hydroxylation of AVN to 5'hydroxyaverantin (HAVN). The next step is performed by adhA that transforms HAVN to averufin (AVF). Averufin might then be converted to hydroxyversicolorone by cypX and avfA. Hydroxyversicolorone is further converted versiconal hemiacetal acetate (VHA) by moxY. VHA is then the substrate for the versiconal hemiacetal acetate esterase est1 to yield versiconal (VAL). Versicolorin B synthase vbsA then converts VAL to versicolorin B (VERB) by closing the bisfuran ring. Then, the activity of the versicolorin B desaturase verB leads to versicolorin A (VERA). DotB, a predicted chloroperoxidase, may perform epoxidation of the A-ring of VERA. Alternatively, a cytochrome P450, such as cypX or avnA could catalyze this step. It is also possible that another, uncharacterized, cytochrome P450 enzyme is responsible for this step. Opening of the epoxide could potentially be achieved by the epoxide hydrolase epoA. However, epoA seems not to be required for DOTH biosynthesis, but other epoxide hydrolases may have the ability to complement this hydrolysis. Alternatively, opening of the epoxide ring could be achieved non-enzymatically. The next step is the deoxygenation of ring A to yield the 5,8-dihydroxyanthraquinone which is most likely catalyzed by the NADPH dehydrogenase encoded by ver1. The last stages of DOTH biosynthesis are proposed to involve hydroxylation of the bisfuran. OrdB and norB might have oxidative roles here. An alternative possibility is that cytochrome P450 monoogenases such as avnA and cypX might perform these steps in addition to previously proposed steps. The sequence is that of Averufin oxidase A from Dothistroma septosporum (strain NZE10 / CBS 128990) (Red band needle blight fungus).